The chain runs to 110 residues: Large ribosomal subunit protein uL22 (110 aa).

The protein belongs to the universal ribosomal protein uL22 family. Part of the 50S ribosomal subunit.

This protein binds specifically to 23S rRNA; its binding is stimulated by other ribosomal proteins, e.g. L4, L17, and L20. It is important during the early stages of 50S assembly. It makes multiple contacts with different domains of the 23S rRNA in the assembled 50S subunit and ribosome. In terms of biological role, the globular domain of the protein is located near the polypeptide exit tunnel on the outside of the subunit, while an extended beta-hairpin is found that lines the wall of the exit tunnel in the center of the 70S ribosome. The protein is Large ribosomal subunit protein uL22 of Leptospira interrogans serogroup Icterohaemorrhagiae serovar copenhageni (strain Fiocruz L1-130).